The following is a 93-amino-acid chain: Large ribosomal subunit protein bL27 (93 aa).

The propeptide occupies 1-9; it reads MIKINLQLF.

Belongs to the bacterial ribosomal protein bL27 family. Post-translationally, the N-terminus is cleaved by ribosomal processing cysteine protease Prp.

The sequence is that of Large ribosomal subunit protein bL27 from Ruminiclostridium cellulolyticum (strain ATCC 35319 / DSM 5812 / JCM 6584 / H10) (Clostridium cellulolyticum).